The primary structure comprises 348 residues: S-adenosylmethionine:tRNA ribosyltransferase-isomerase (348 aa).

It belongs to the QueA family. Monomer.

It is found in the cytoplasm. It catalyses the reaction 7-aminomethyl-7-carbaguanosine(34) in tRNA + S-adenosyl-L-methionine = epoxyqueuosine(34) in tRNA + adenine + L-methionine + 2 H(+). The protein operates within tRNA modification; tRNA-queuosine biosynthesis. Its function is as follows. Transfers and isomerizes the ribose moiety from AdoMet to the 7-aminomethyl group of 7-deazaguanine (preQ1-tRNA) to give epoxyqueuosine (oQ-tRNA). This is S-adenosylmethionine:tRNA ribosyltransferase-isomerase from Alteromonas mediterranea (strain DSM 17117 / CIP 110805 / LMG 28347 / Deep ecotype).